Here is a 222-residue protein sequence, read N- to C-terminus: MKSFSFLAVLSILAITLSLSKASDPSSLQDFCVGVNTPADGVFVNGKFCKDPKLVTVEDFFFTGLHEARPPNPKTGSNVTAVNVNNLPGLNTLGISLVRIDYGVYGQNPPHTHPRASEVLYVAVGTLFVGFVTSNPENRLFSKTLYEGDVFVFPQGLIHFQVNVGKYPAVAFAGLSSQNPGVITIADTVFGSNPQIDPSFLASAFQVDPKIVMDLQTKFIKP.

A signal peptide spans 1-22 (MKSFSFLAVLSILAITLSLSKA). Cysteines 32 and 49 form a disulfide. Residues 63 to 213 (TGLHEARPPN…AFQVDPKIVM (151 aa)) enclose the Cupin type-1 domain. A glycan (N-linked (GlcNAc...) asparagine) is linked at asparagine 78. Histidine 111, histidine 113, glutamate 118, and histidine 159 together coordinate Mn(2+).

This sequence belongs to the germin family. Oligomer (believed to be a pentamer but probably hexamer).

It is found in the secreted. The protein resides in the extracellular space. Its subcellular location is the apoplast. Its function is as follows. May play a role in plant defense. Probably has no oxalate oxidase activity even if the active site is conserved. This chain is Putative germin-like protein subfamily 1 member 9, found in Arabidopsis thaliana (Mouse-ear cress).